A 276-amino-acid chain; its full sequence is Bis(5'-nucleosyl)-tetraphosphatase, symmetrical (276 aa).

Belongs to the Ap4A hydrolase family.

The enzyme catalyses P(1),P(4)-bis(5'-adenosyl) tetraphosphate + H2O = 2 ADP + 2 H(+). Hydrolyzes diadenosine 5',5'''-P1,P4-tetraphosphate to yield ADP. The polypeptide is Bis(5'-nucleosyl)-tetraphosphatase, symmetrical (Neisseria gonorrhoeae (strain ATCC 700825 / FA 1090)).